The chain runs to 385 residues: Succinate--CoA ligase [ADP-forming] subunit beta (385 aa).

In terms of domain architecture, ATP-grasp spans 9–244 (KALFRTFGVP…LDEEDPLEVE (236 aa)). ATP is bound by residues lysine 46, 53 to 55 (GRG), glutamate 99, glutamine 102, and glutamate 107. Mg(2+) contacts are provided by asparagine 199 and aspartate 213. Substrate contacts are provided by residues asparagine 264 and 321-323 (GIL).

This sequence belongs to the succinate/malate CoA ligase beta subunit family. As to quaternary structure, heterotetramer of two alpha and two beta subunits. Requires Mg(2+) as cofactor.

It carries out the reaction succinate + ATP + CoA = succinyl-CoA + ADP + phosphate. The catalysed reaction is GTP + succinate + CoA = succinyl-CoA + GDP + phosphate. It participates in carbohydrate metabolism; tricarboxylic acid cycle; succinate from succinyl-CoA (ligase route): step 1/1. In terms of biological role, succinyl-CoA synthetase functions in the citric acid cycle (TCA), coupling the hydrolysis of succinyl-CoA to the synthesis of either ATP or GTP and thus represents the only step of substrate-level phosphorylation in the TCA. The beta subunit provides nucleotide specificity of the enzyme and binds the substrate succinate, while the binding sites for coenzyme A and phosphate are found in the alpha subunit. The protein is Succinate--CoA ligase [ADP-forming] subunit beta of Desulforapulum autotrophicum (strain ATCC 43914 / DSM 3382 / VKM B-1955 / HRM2) (Desulfobacterium autotrophicum).